Here is a 256-residue protein sequence, read N- to C-terminus: Ribosomal RNA large subunit methyltransferase E (256 aa).

Residues G48, W50, D68, D86, and D111 each coordinate S-adenosyl-L-methionine. The active-site Proton acceptor is K151. One can recognise a TRAM domain in the interval P198–E256.

Belongs to the class I-like SAM-binding methyltransferase superfamily. RNA methyltransferase RlmE family.

Its subcellular location is the cytoplasm. It catalyses the reaction uridine(2552) in 23S rRNA + S-adenosyl-L-methionine = 2'-O-methyluridine(2552) in 23S rRNA + S-adenosyl-L-homocysteine + H(+). Its function is as follows. Specifically methylates the uridine in position 2552 of 23S rRNA at the 2'-O position of the ribose in the fully assembled 50S ribosomal subunit. This chain is Ribosomal RNA large subunit methyltransferase E, found in Haloquadratum walsbyi (strain DSM 16790 / HBSQ001).